A 317-amino-acid polypeptide reads, in one-letter code: Small ribosomal subunit protein RACK1 (317 aa).

WD repeat units lie at residues 13 to 44, 61 to 91, 103 to 133, 146 to 178, 190 to 220, 231 to 260, and 281 to 311; these read GHSG…IMWK, GHSH…RLWD, GHTK…KLWN, SHTE…KVWN, GHTG…MLWD, DGGD…KIWD, and AEPP…RVWQ.

Belongs to the WD repeat G protein beta family. Ribosomal protein RACK1 subfamily.

The protein resides in the cytoplasm. In terms of biological role, involved in the recruitment, assembly and/or regulation of a variety of signaling molecules. Interacts with a wide variety of proteins and plays a role in many cellular processes. Required for VANGL2 membrane localization, inhibits Wnt signaling and regulates cellular polarization and oriented cell division during gastrulation. The chain is Small ribosomal subunit protein RACK1 (gnb2l1) from Danio rerio (Zebrafish).